The sequence spans 215 residues: MTDHNEAKKVLLSPFISNNPIMLQVLGICSALAVTSKMETAFVMALAVTVVTGFSNLFISLIRHIIPNSVRIIVQMTIIASLVIVVDQLLKAFSYELSKQLSVFVGLIITNCIVMGRAEAYAMKSPPWLSFLDGIGNGLGYGFILLLVGTIREVIGSGSWFGITLFETVNNGGWYIPNGMLLMPPSAFFLIGLFIWVLRTLRPEQQEPTEHGHKE.

6 helical membrane passes run 14-34 (PFIS…ALAV), 42-62 (FVMA…ISLI), 72-92 (IIVQ…LLKA), 103-123 (VFVG…AYAM), 131-151 (FLDG…VGTI), and 178-198 (NGML…IWVL).

The protein belongs to the NqrDE/RnfAE family. Composed of six subunits; NqrA, NqrB, NqrC, NqrD, NqrE and NqrF.

The protein localises to the cell inner membrane. It carries out the reaction a ubiquinone + n Na(+)(in) + NADH + H(+) = a ubiquinol + n Na(+)(out) + NAD(+). Its function is as follows. NQR complex catalyzes the reduction of ubiquinone-1 to ubiquinol by two successive reactions, coupled with the transport of Na(+) ions from the cytoplasm to the periplasm. NqrA to NqrE are probably involved in the second step, the conversion of ubisemiquinone to ubiquinol. This chain is Na(+)-translocating NADH-quinone reductase subunit D, found in Tolumonas auensis (strain DSM 9187 / NBRC 110442 / TA 4).